Here is a 315-residue protein sequence, read N- to C-terminus: Protein rlx (315 aa).

A disordered region spans residues threonine 263 to arginine 315.

This protein is probably required for relaxation complex formation and plasmid mobilization by conjugative plasmids. This is Protein rlx (rlx) from Staphylococcus aureus.